Reading from the N-terminus, the 567-residue chain is Mitogen-activated protein kinase 16 (567 aa).

Residues 25–316 (YRIEEVIGKG…AEEALADVYF (292 aa)) enclose the Protein kinase domain. ATP contacts are provided by residues 31–39 (IGKGSYGVV) and K54. The active-site Proton acceptor is D151. Position 187 is a phosphothreonine (T187). Residues 187–189 (TDY) carry the TXY motif. Y189 is subject to Phosphotyrosine. Phosphothreonine is present on T192. Disordered stretches follow at residues 428–455 (AQQS…ADRN) and 512–567 (PAAA…SRWY). Over residues 443 to 453 (SIRDERPRGAD) the composition is skewed to basic and acidic residues. Residues 545-567 (KPNTQYIPQKVSAAQDTAMSRWY) show a composition bias toward polar residues.

The protein belongs to the protein kinase superfamily. CMGC Ser/Thr protein kinase family. MAP kinase subfamily. In terms of processing, dually phosphorylated on Thr-187 and Tyr-189, which activates the enzyme.

It carries out the reaction L-seryl-[protein] + ATP = O-phospho-L-seryl-[protein] + ADP + H(+). The catalysed reaction is L-threonyl-[protein] + ATP = O-phospho-L-threonyl-[protein] + ADP + H(+). With respect to regulation, activated by threonine and tyrosine phosphorylation. This chain is Mitogen-activated protein kinase 16 (MPK16), found in Arabidopsis thaliana (Mouse-ear cress).